Here is a 123-residue protein sequence, read N- to C-terminus: CD59A glycoprotein (123 aa).

A signal peptide spans Met-1–Ser-23. The 73-residue stretch at Leu-24–Ser-96 folds into the UPAR/Ly6 domain. 5 disulfide bridges follow: Cys-26–Cys-50, Cys-29–Cys-37, Cys-43–Cys-63, Cys-69–Cys-87, and Cys-88–Cys-93. Asn-40 is a glycosylation site (N-linked (GlcNAc...) asparagine). The N-linked (GlcNAc...) asparagine glycan is linked to Asn-94. The propeptide at Asp-97–Leu-123 is removed in mature form.

Interacts with T-cell surface antigen CD2. N- and O-glycosylated. As to expression, expressed in all tissues examined (liver, kidney, spleen, thymus, brain and heart). Low levels in thymus. Also expressed in mononuclear cells, erythrocytes and platelets. Barely detected in neutrophils.

The protein resides in the cell membrane. Its subcellular location is the secreted. Functionally, potent inhibitor of the complement membrane attack complex (MAC) action, which protects self-cells from damage during complement activation. Acts by binding to the beta-haipins of C8 (C8A and C8B) components of the assembling MAC, forming an intermolecular beta-sheet that prevents incorporation of the multiple copies of C9 required for complete formation of the osmolytic pore. This is CD59A glycoprotein from Mus musculus (Mouse).